We begin with the raw amino-acid sequence, 307 residues long: Coproporphyrin III ferrochelatase (307 aa).

Residues Tyr-12, Arg-29, 45 to 46, Ser-53, and Tyr-124 each bind Fe-coproporphyrin III; that span reads RY. Positions 181 and 263 each coordinate Fe(2+).

This sequence belongs to the ferrochelatase family.

The protein localises to the cytoplasm. It carries out the reaction Fe-coproporphyrin III + 2 H(+) = coproporphyrin III + Fe(2+). Its pathway is porphyrin-containing compound metabolism; protoheme biosynthesis. In terms of biological role, involved in coproporphyrin-dependent heme b biosynthesis. Catalyzes the insertion of ferrous iron into coproporphyrin III to form Fe-coproporphyrin III. It can also insert iron into protoporphyrin IX, but it has a much stronger preference for coproprophyrin III as the substrate. This is Coproporphyrin III ferrochelatase from Staphylococcus aureus (strain NCTC 8325 / PS 47).